Consider the following 220-residue polypeptide: Glycerol-3-phosphate acyltransferase (220 aa).

Transmembrane regions (helical) follow at residues 11–31 (INVI…GYAL), 70–90 (LLVL…SKLF), 96–116 (LQWM…FLNF), 127–147 (GSVV…WFFV), 153–173 (ISSL…FFVP), and 193–213 (MVLI…NLLA).

It belongs to the PlsY family. In terms of assembly, probably interacts with PlsX.

It localises to the cell inner membrane. It catalyses the reaction an acyl phosphate + sn-glycerol 3-phosphate = a 1-acyl-sn-glycero-3-phosphate + phosphate. It participates in lipid metabolism; phospholipid metabolism. In terms of biological role, catalyzes the transfer of an acyl group from acyl-phosphate (acyl-PO(4)) to glycerol-3-phosphate (G3P) to form lysophosphatidic acid (LPA). This enzyme utilizes acyl-phosphate as fatty acyl donor, but not acyl-CoA or acyl-ACP. This is Glycerol-3-phosphate acyltransferase from Helicobacter pylori (strain ATCC 700392 / 26695) (Campylobacter pylori).